The chain runs to 298 residues: N-acetylmuramic acid 6-phosphate etherase (298 aa).

Residues 55 to 218 (IHAQVSGGGR…STGLMIKSGK (164 aa)) form the SIS domain. The active-site Proton donor is the glutamate 83. Glutamate 114 is a catalytic residue.

It belongs to the GCKR-like family. MurNAc-6-P etherase subfamily. In terms of assembly, homodimer.

It carries out the reaction N-acetyl-D-muramate 6-phosphate + H2O = N-acetyl-D-glucosamine 6-phosphate + (R)-lactate. It functions in the pathway amino-sugar metabolism; 1,6-anhydro-N-acetylmuramate degradation. It participates in amino-sugar metabolism; N-acetylmuramate degradation. Its pathway is cell wall biogenesis; peptidoglycan recycling. Specifically catalyzes the cleavage of the D-lactyl ether substituent of MurNAc 6-phosphate, producing GlcNAc 6-phosphate and D-lactate. Together with AnmK, is also required for the utilization of anhydro-N-acetylmuramic acid (anhMurNAc) either imported from the medium or derived from its own cell wall murein, and thus plays a role in cell wall recycling. The polypeptide is N-acetylmuramic acid 6-phosphate etherase (Escherichia coli O8 (strain IAI1)).